Consider the following 278-residue polypeptide: 3-methyl-2-oxobutanoate hydroxymethyltransferase (278 aa).

Residues aspartate 43 and aspartate 82 each coordinate Mg(2+). Residues 43–44 (DS), aspartate 82, and lysine 112 each bind 3-methyl-2-oxobutanoate. Residue glutamate 114 coordinates Mg(2+). The Proton acceptor role is filled by glutamate 181.

It belongs to the PanB family. As to quaternary structure, homodecamer; pentamer of dimers. Requires Mg(2+) as cofactor.

Its subcellular location is the cytoplasm. It carries out the reaction 3-methyl-2-oxobutanoate + (6R)-5,10-methylene-5,6,7,8-tetrahydrofolate + H2O = 2-dehydropantoate + (6S)-5,6,7,8-tetrahydrofolate. The protein operates within cofactor biosynthesis; (R)-pantothenate biosynthesis; (R)-pantoate from 3-methyl-2-oxobutanoate: step 1/2. Its function is as follows. Catalyzes the reversible reaction in which hydroxymethyl group from 5,10-methylenetetrahydrofolate is transferred onto alpha-ketoisovalerate to form ketopantoate. The chain is 3-methyl-2-oxobutanoate hydroxymethyltransferase from Bacillus cereus (strain G9842).